A 318-amino-acid chain; its full sequence is MMHRNQTVVTEFFFTGLTSSFHLQIVLFLTFLCVYLATLLGNLGMIILIHLDTRLHIPMYFFLSHLSFVDACSSSVISPKMLSDMFVDKKVISFLGCAIQLCLFSQFVVTECFLLASMAYDRYVAICKPLLYTLIMSQRVCVQLVIGPYSIGFVSTMVHIISAFVLPYCGPNLINHFFCDLLPVLSLACANTQMKKRLLFIVAGILGVFSGIIILVSYVYIAITILKISSADGRRKAFSTCSSHLTAVSILYGTLFFIYVRPSSSFSLDINKVVSLFYTTVIPMLNPFIYSLRNKEVKDALIRTFEKQFCYSFQDKIL.

At Met1 to Phe28 the chain is on the extracellular side. Residue Asn5 is glycosylated (N-linked (GlcNAc...) asparagine). Residues Leu29–Ile49 traverse the membrane as a helical segment. Residues His50–His56 are Cytoplasmic-facing. A helical transmembrane segment spans residues Ile57–Ile77. The Extracellular portion of the chain corresponds to Ser78–Ser93. Residues Phe94–Leu114 form a helical membrane-spanning segment. Cys97 and Cys189 are oxidised to a cystine. At Leu115–Leu144 the chain is on the cytoplasmic side. A helical transmembrane segment spans residues Val145–Val165. At Leu166 to Leu198 the chain is on the extracellular side. Residues Leu199–Val219 traverse the membrane as a helical segment. Residues Tyr220–Ser239 lie on the Cytoplasmic side of the membrane. The chain crosses the membrane as a helical span at residues Thr240–Val260. The Extracellular segment spans residues Arg261–Asn271. A helical transmembrane segment spans residues Lys272–Leu292. The Cytoplasmic segment spans residues Arg293–Leu318.

This sequence belongs to the G-protein coupled receptor 1 family.

It is found in the cell membrane. In terms of biological role, potential odorant receptor. This is Olfactory receptor 5G26 from Mus musculus (Mouse).